A 111-amino-acid polypeptide reads, in one-letter code: uncharacterized protein (111 aa).

This is an uncharacterized protein from Enterococcus faecalis (strain ATCC 700802 / V583).